Consider the following 502-residue polypeptide: D-alanine--D-alanyl carrier protein ligase (502 aa).

Position 150–151 (150–151 (TS)) interacts with ATP. D195 contributes to the D-alanine binding site. 290–295 (NTYGPT) provides a ligand contact to ATP. A D-alanine-binding site is contributed by V299. 2 residues coordinate ATP: D381 and K490. D-alanine is bound at residue K490.

Belongs to the ATP-dependent AMP-binding enzyme family. DltA subfamily.

It localises to the cytoplasm. The enzyme catalyses holo-[D-alanyl-carrier protein] + D-alanine + ATP = D-alanyl-[D-alanyl-carrier protein] + AMP + diphosphate. It functions in the pathway cell wall biogenesis; lipoteichoic acid biosynthesis. Functionally, catalyzes the first step in the D-alanylation of lipoteichoic acid (LTA), the activation of D-alanine and its transfer onto the D-alanyl carrier protein (Dcp) DltC. In an ATP-dependent two-step reaction, forms a high energy D-alanyl-AMP intermediate, followed by transfer of the D-alanyl residue as a thiol ester to the phosphopantheinyl prosthetic group of the Dcp. D-alanylation of LTA plays an important role in modulating the properties of the cell wall in Gram-positive bacteria, influencing the net charge of the cell wall. This chain is D-alanine--D-alanyl carrier protein ligase, found in Bacillus licheniformis (strain ATCC 14580 / DSM 13 / JCM 2505 / CCUG 7422 / NBRC 12200 / NCIMB 9375 / NCTC 10341 / NRRL NRS-1264 / Gibson 46).